Reading from the N-terminus, the 422-residue chain is tRNA hydroxylation protein P (422 aa).

The N-terminal stretch at 1–58 (MNQVELLSPAGNLKKLKIALNYGADAVYGGVSHFSLRNRAGKEFTLETFKEGIDYAHA) is a signal peptide.

Belongs to the peptidase U32 family.

Functionally, involved in prephenate-dependent formation of 5-hydroxyuridine (ho5U) modification at position 34 in tRNAs, the first step in 5-carboxymethoxyuridine (cmo5U) biosynthesis. The chain is tRNA hydroxylation protein P from Helicobacter pylori (strain J99 / ATCC 700824) (Campylobacter pylori J99).